Here is a 366-residue protein sequence, read N- to C-terminus: Polyamine aminopropyltransferase 2 (366 aa).

Residues 20 to 58 (KDKRSELDSDKFELEQQDKHDIQDKQDKQDEQNKQDKQV) are compositionally biased toward basic and acidic residues. The disordered stretch occupies residues 20–61 (KDKRSELDSDKFELEQQDKHDIQDKQDKQDEQNKQDKQVQSE). Residues 74–305 (DVWDEISLKE…TDWGFHLATN (232 aa)) enclose the PABS domain. Residue Gln100 participates in S-methyl-5'-thioadenosine binding. Positions 129 and 153 each coordinate spermidine. S-methyl-5'-thioadenosine is bound by residues Asp173 and 207–208 (DA). The active-site Proton acceptor is the Asp225.

This sequence belongs to the spermidine/spermine synthase family. As to quaternary structure, homodimer or homotetramer.

The protein localises to the cytoplasm. The catalysed reaction is S-adenosyl 3-(methylsulfanyl)propylamine + putrescine = S-methyl-5'-thioadenosine + spermidine + H(+). Its pathway is amine and polyamine biosynthesis; spermidine biosynthesis; spermidine from putrescine: step 1/1. Catalyzes the irreversible transfer of a propylamine group from the amino donor S-adenosylmethioninamine (decarboxy-AdoMet) to putrescine (1,4-diaminobutane) to yield spermidine. This chain is Polyamine aminopropyltransferase 2, found in Bacillus cereus (strain ATCC 14579 / DSM 31 / CCUG 7414 / JCM 2152 / NBRC 15305 / NCIMB 9373 / NCTC 2599 / NRRL B-3711).